Here is an 89-residue protein sequence, read N- to C-terminus: Cell division topological specificity factor (89 aa).

This sequence belongs to the MinE family.

Functionally, prevents the cell division inhibition by proteins MinC and MinD at internal division sites while permitting inhibition at polar sites. This ensures cell division at the proper site by restricting the formation of a division septum at the midpoint of the long axis of the cell. This chain is Cell division topological specificity factor, found in Pectobacterium atrosepticum (strain SCRI 1043 / ATCC BAA-672) (Erwinia carotovora subsp. atroseptica).